Here is a 184-residue protein sequence, read N- to C-terminus: Ribosome-recycling factor (184 aa).

Belongs to the RRF family.

Its subcellular location is the cytoplasm. Functionally, responsible for the release of ribosomes from messenger RNA at the termination of protein biosynthesis. May increase the efficiency of translation by recycling ribosomes from one round of translation to another. The sequence is that of Ribosome-recycling factor from Borreliella afzelii (strain PKo) (Borrelia afzelii).